Reading from the N-terminus, the 311-residue chain is Ribose-phosphate pyrophosphokinase (311 aa).

Residues 34 to 36 and 93 to 94 each bind ATP; these read DQE and RQ. The Mg(2+) site is built by His-127 and Asp-168. The active site involves Lys-191. D-ribose 5-phosphate contacts are provided by residues Arg-193, Asp-217, and 221–225; that span reads DSGGT.

Belongs to the ribose-phosphate pyrophosphokinase family. Class I subfamily. Homohexamer. The cofactor is Mg(2+).

The protein resides in the cytoplasm. It catalyses the reaction D-ribose 5-phosphate + ATP = 5-phospho-alpha-D-ribose 1-diphosphate + AMP + H(+). The protein operates within metabolic intermediate biosynthesis; 5-phospho-alpha-D-ribose 1-diphosphate biosynthesis; 5-phospho-alpha-D-ribose 1-diphosphate from D-ribose 5-phosphate (route I): step 1/1. Its function is as follows. Involved in the biosynthesis of the central metabolite phospho-alpha-D-ribosyl-1-pyrophosphate (PRPP) via the transfer of pyrophosphoryl group from ATP to 1-hydroxyl of ribose-5-phosphate (Rib-5-P). This Mesorhizobium japonicum (strain LMG 29417 / CECT 9101 / MAFF 303099) (Mesorhizobium loti (strain MAFF 303099)) protein is Ribose-phosphate pyrophosphokinase.